A 90-amino-acid chain; its full sequence is Small ribosomal subunit protein uS15 (90 aa).

The protein belongs to the universal ribosomal protein uS15 family. As to quaternary structure, part of the 30S ribosomal subunit. Forms a bridge to the 50S subunit in the 70S ribosome, contacting the 23S rRNA.

Functionally, one of the primary rRNA binding proteins, it binds directly to 16S rRNA where it helps nucleate assembly of the platform of the 30S subunit by binding and bridging several RNA helices of the 16S rRNA. In terms of biological role, forms an intersubunit bridge (bridge B4) with the 23S rRNA of the 50S subunit in the ribosome. The protein is Small ribosomal subunit protein uS15 of Tropheryma whipplei (strain TW08/27) (Whipple's bacillus).